The primary structure comprises 380 residues: Serpin B7 (380 aa).

Serine 217 is subject to Phosphoserine.

Belongs to the serpin family. Ov-serpin subfamily.

It is found in the cytoplasm. Its function is as follows. Might function as an inhibitor of Lys-specific proteases. Might influence the maturation of megakaryocytes via its action as a serpin. The protein is Serpin B7 (Serpinb7) of Mus musculus (Mouse).